The chain runs to 653 residues: Multidomain regulatory protein MT1410 (653 aa).

A PAC domain is found at 86-142; it reads SGSEWRLQTDYDGSGVEERYFDFVVTPRRRADGSIEGVQLIVDDVTSRVRARQAAEA. In terms of domain architecture, PPM-type phosphatase spans 177 to 396; it reads DIAAEYLVAA…DDVTLLAMQR (220 aa). Mn(2+) is bound by residues Asp-211, Val-212, Asp-328, and Asp-387. An anti-sigma factor kinase region region spans residues 397 to 544; that stretch reads RAPTPPLHIT…TMVRRAAFQQ (148 aa). An STAS domain is found at 546-653; the sequence is IDSEFVSLVE…ADTEDIFAQE (108 aa). Ser-600 bears the Phosphoserine mark.

Requires Mg(2+) as cofactor. Mn(2+) is required as a cofactor. Post-translationally, autophosphorylated.

It carries out the reaction O-phospho-L-seryl-[protein] + H2O = L-seryl-[protein] + phosphate. The enzyme catalyses O-phospho-L-threonyl-[protein] + H2O = L-threonyl-[protein] + phosphate. It catalyses the reaction L-seryl-[protein] + ATP = O-phospho-L-seryl-[protein] + ADP + H(+). The catalysed reaction is L-threonyl-[protein] + ATP = O-phospho-L-threonyl-[protein] + ADP + H(+). Its function is as follows. Primarily acts as an independent SigF regulator that is sensitive to the osmosensory signal, mediating the cross talk of PknD with the SigF regulon. Possesses both phosphatase and kinase activities. The kinase domain functions as a classic anti-sigma factor-like kinase to phosphorylate the anti-anti-sigma factor domain at the canonical regulatory site, and the phosphatase domain antagonizes this activity. This chain is Multidomain regulatory protein MT1410, found in Mycobacterium tuberculosis (strain CDC 1551 / Oshkosh).